The primary structure comprises 3856 residues: Serine/threonine-protein kinase ATM (3856 aa).

Positions 108–162 constitute a PWWP domain; it reads VGNLVWVMTKYKKWWPGEVVDFKADAKESFMVRSIGQSHLVSWFASSKLKPFKES. Positions 648 to 681 are disordered; it reads GIPDLNGTNTEPTLVLPQVEPTQRRRRRKKEESP. Residues 2727 to 3393 enclose the FAT domain; it reads VVAGSAVVCG…ILQLLALANG (667 aa). The Bipartite nuclear localization signal signature appears at 3233–3249; it reads RKHKTKELEVFIKRFKS. The PI3K/PI4K catalytic domain occupies 3499–3811; that stretch reads LSDSVTVMNG…GNKDATRALM (313 aa). The segment at 3505-3511 is G-loop; sequence VMNGINA. Residues 3678–3686 are catalytic loop; sequence GLGDRHAMN. The segment at 3698–3722 is activation loop; it reads HIDLGVAFEQGLMLKTPERVPFRLT. The FATC domain occupies 3824–3856; sequence EMRSIHGQAQQLIQDAIDTDRLSHMFPGWGAWM.

Belongs to the PI3/PI4-kinase family. Interacts with RUG3. As to expression, ubiquitously expressed at low levels with slightly higher levels in flower buds.

The protein resides in the nucleus. The catalysed reaction is L-seryl-[protein] + ATP = O-phospho-L-seryl-[protein] + ADP + H(+). The enzyme catalyses L-threonyl-[protein] + ATP = O-phospho-L-threonyl-[protein] + ADP + H(+). In terms of biological role, serine/threonine protein kinase which activates checkpoint signaling upon genotoxic stresses such as ionizing radiation (IR) or DNA replication stalling. Plays a central role in the perception and response to both stress-induced damage in somatic cells and developmentally programmed DNA damage during meiosis. Recognizes the substrate consensus sequence [ST]-Q. Phosphorylates histone variant H2AX to form H2AXS139ph at double strand breaks (DSBs), thereby regulating DNA damage response mechanism. Involved in transcriptional regulation of RAD51, PARP1, GR1, and LIG4 in response to DNA double strand breaks. Plays a dual role by activating the DNA damage response at dysfunctional telomeres and yet preventing this activation at functional telomeres. Not required for telomere length homeostasis. Regulates DNA damage response (DDR) synergistically with RUG3. Together with RUG3, involved in the splicing of the ND2/NAD2 mRNA. The chain is Serine/threonine-protein kinase ATM from Arabidopsis thaliana (Mouse-ear cress).